The primary structure comprises 623 residues: Putative disease resistance protein At5g47280 (623 aa).

NB-ARC domains lie at 2–51 and 119–249; these read LFNL…VSQS and VDPR…NMLV. Position 16-23 (16-23) interacts with ATP; it reads GMIGSGKT. 4 LRR repeats span residues 488–511, 512–534, 536–558, and 560–581; these read SLNSISITNCPNIKELPKNISKLQ, ALQLLRLYACPELKSLPVEICEL, RLVYVDISHCLSLSSLPEKIGNV, and TLEKIDMRECSLSSIPSSAVSL.

It belongs to the disease resistance NB-LRR family.

Functionally, potential disease resistance protein. The polypeptide is Putative disease resistance protein At5g47280 (Arabidopsis thaliana (Mouse-ear cress)).